A 332-amino-acid chain; its full sequence is Ribosomal RNA small subunit methyltransferase H (332 aa).

S-adenosyl-L-methionine-binding positions include 42-44 (GGH), aspartate 62, phenylalanine 86, aspartate 105, and glutamine 112.

Belongs to the methyltransferase superfamily. RsmH family.

The protein localises to the cytoplasm. It catalyses the reaction cytidine(1402) in 16S rRNA + S-adenosyl-L-methionine = N(4)-methylcytidine(1402) in 16S rRNA + S-adenosyl-L-homocysteine + H(+). Its function is as follows. Specifically methylates the N4 position of cytidine in position 1402 (C1402) of 16S rRNA. This is Ribosomal RNA small subunit methyltransferase H from Cupriavidus pinatubonensis (strain JMP 134 / LMG 1197) (Cupriavidus necator (strain JMP 134)).